The sequence spans 835 residues: Cap-specific mRNA (nucleoside-2'-O-)-methyltransferase 1 (835 aa).

Positions 1–67 (MKRRTDPECT…EGKQHSSDSF (67 aa)) are disordered. Residues 2-19 (KRRTDPECTAPIKKQKKR) carry the Bipartite nuclear localization signal motif. Residues Ser-28, Ser-31, Ser-53, Ser-66, and Ser-91 each carry the phosphoserine modification. Over residues 37-54 (SSVSHGAKASTTSLSGSD) the composition is skewed to polar residues. Basic and acidic residues predominate over residues 57 to 67 (TEGKQHSSDSF). Residues 87–133 (YNSVSQKLMAKMGFREGEGLGKYSQGRKDIVEASSQKGRRGLGLTLR) form the G-patch domain. Lys-108 bears the N6-acetyllysine mark. Substrate-binding positions include 203–207 (KSVFD) and Arg-218. Residues 231-450 (FFLNRAAMKM…ERYVVCKGLK (220 aa)) enclose the RrmJ-type SAM-dependent 2'-O-MTase domain. An S-adenosyl-L-methionine-binding site is contributed by Asn-234. Lys-239 is a catalytic residue. S-adenosyl-L-methionine-binding positions include 277-283 (CAGPGGF) and 335-336 (DI). Residue Asp-364 is part of the active site. 374–376 (NLQ) provides a ligand contact to substrate. Catalysis depends on Lys-404, which acts as the Proton acceptor. Asn-439 is a binding site for substrate. The interaction with POLR2A stretch occupies residues 727–835 (SSGTPKLSYT…VLSFIQMHRA (109 aa)). One can recognise a WW domain in the interval 752–786 (RTVNEPWTMGFSKSFKKKFFYNKKTKDSTFDLPAD).

In terms of assembly, interacts with POLR2A (via C-terminus).

It is found in the nucleus. It catalyses the reaction a 5'-end (N(7)-methyl 5'-triphosphoguanosine)-ribonucleoside in mRNA + S-adenosyl-L-methionine = a 5'-end (N(7)-methyl 5'-triphosphoguanosine)-(2'-O-methyl-ribonucleoside) in mRNA + S-adenosyl-L-homocysteine + H(+). Functionally, S-adenosyl-L-methionine-dependent methyltransferase that mediates mRNA cap1 2'-O-ribose methylation to the 5'-cap structure of mRNAs. Methylates the ribose of the first nucleotide of a m(7)GpppG-capped mRNA and small nuclear RNA (snRNA) to produce m(7)GpppRm (cap1). Displays a preference for cap0 transcripts. Cap1 modification is linked to higher levels of translation. May be involved in the interferon response pathway. The chain is Cap-specific mRNA (nucleoside-2'-O-)-methyltransferase 1 (CMTR1) from Homo sapiens (Human).